The primary structure comprises 298 residues: Cyclin-D4-2 (298 aa).

Belongs to the cyclin family. Cyclin D subfamily. In terms of assembly, interacts with CDKA-1 to form a kinase complex.

Its function is as follows. May promote cell division. The sequence is that of Cyclin-D4-2 (CYCD4-2) from Arabidopsis thaliana (Mouse-ear cress).